We begin with the raw amino-acid sequence, 364 residues long: Aminomethyltransferase (364 aa).

This sequence belongs to the GcvT family. As to quaternary structure, the glycine cleavage system is composed of four proteins: P, T, L and H.

It carries out the reaction N(6)-[(R)-S(8)-aminomethyldihydrolipoyl]-L-lysyl-[protein] + (6S)-5,6,7,8-tetrahydrofolate = N(6)-[(R)-dihydrolipoyl]-L-lysyl-[protein] + (6R)-5,10-methylene-5,6,7,8-tetrahydrofolate + NH4(+). Its function is as follows. The glycine cleavage system catalyzes the degradation of glycine. The chain is Aminomethyltransferase from Shewanella baltica (strain OS195).